A 202-amino-acid polypeptide reads, in one-letter code: uncharacterized protein (202 aa).

The protein belongs to the NAD(P)H dehydrogenase (quinone) family.

This is an uncharacterized protein from Haemophilus influenzae (strain ATCC 51907 / DSM 11121 / KW20 / Rd).